We begin with the raw amino-acid sequence, 519 residues long: ATP synthase subunit alpha, mitochondrial (519 aa).

188-195 is an ATP binding site; it reads GDRQTGKS.

Belongs to the ATPase alpha/beta chains family. In terms of assembly, F-type ATPases have 2 components, CF(1) - the catalytic core - and CF(0) - the membrane proton channel. CF(1) has five subunits: alpha(3), beta(3), gamma(1), delta(1), epsilon(1). CF(0) has three main subunits: a, b and c.

Its subcellular location is the mitochondrion. It is found in the mitochondrion inner membrane. Functionally, mitochondrial membrane ATP synthase (F(1)F(0) ATP synthase or Complex V) produces ATP from ADP in the presence of a proton gradient across the membrane which is generated by electron transport complexes of the respiratory chain. F-type ATPases consist of two structural domains, F(1) - containing the extramembraneous catalytic core, and F(0) - containing the membrane proton channel, linked together by a central stalk and a peripheral stalk. During catalysis, ATP synthesis in the catalytic domain of F(1) is coupled via a rotary mechanism of the central stalk subunits to proton translocation. Subunits alpha and beta form the catalytic core in F(1). Rotation of the central stalk against the surrounding alpha(3)beta(3) subunits leads to hydrolysis of ATP in three separate catalytic sites on the beta subunits. Subunit alpha does not bear the catalytic high-affinity ATP-binding sites. The chain is ATP synthase subunit alpha, mitochondrial (atp1) from Dictyostelium citrinum (Slime mold).